The following is a 1183-amino-acid chain: MTSSGKIRIYELSKDLSLDNKDVLDAARKLAIAAKSHSSSISTLEANQIKDFLKKSKTINSTSKSSNKLDKQILSVKKNPVKTQKDQKTEPKKKNHDQTELSQAKLNTLLKPSQTLIKNQDSSQANNQKALKNKFPAQQQITAPSKPNKPLPPNPRVEVKPTISKPLTQAESTIPQSEQKKDGQFINQPKRSELAKKPTGQPQQINPQEPKRPLAPPSRPKIDIQDKKPLQPNNQKAKTRINQGEISPQKVGQGNIQKIKSQNKQNQPSRTPQPPTKGNTLELVGAPIRREKPVNKPHTNEVRNKPVMPSRPGAPKPPAAANRQGLSNRPGSNNKIGGTGRPGSQNRQGPNRGGVANRTTQGQNRPGGNNRAGAPVRSGSPNRGGIQNRPGVPTRSLGGPNRSNNRPGVPSGMRKPVAPSELMQLQKPQARPNAPQRKTDSPTSPRPKRENSTGARPPVNRPTPAAPKKPAHRPGGTAAAPRRTGRPDWDDSAKLDALRNKSPQKQRQKVHIIGENDDALTAERGGFAGEQQAVVLSASLARPSKPKVGKRNNGKPLTALKKRKKETTRQRQRRRAMELRAAREAKLVRPEMIVVPEDNLTVQELADMLSVESSEIIKSLFFKGITATVTQSLDLATIETVAEEFGVPVLQDDVEEAAKKTVEMIEEGDLKYLIRRPPVVTVMGHVDHGKTSLLDAIRKSRVAAGEAGGITQHIGAYQIETEHDGSTKKLTFLDTPGHEAFTAMRARGTRVTDVAILVVAADDGVRPQTLEAISHARAAKVPIVVAINKIDKEGSSPDRVKQELSEQDLLSEEWGGDVVMVPVSAIKSENIDKLLEMVLLVTEVEDLQANPDRLAKGTVIEAHLDKAKGPVATLLVQNGTLKSGDVVAAGPVLGKVRAMVDENGSRIKEAGPSCPVEALGFSEVPTAGDEFEVYPDEKAARAVVGERATDARAARLAQQMASRRVSLSSMSGQASEGELKELNIILKADAQGSLEAILGSLEQLPKDEVQVRVLLSAPGEITETDIDLAAASGAVIVGFNTSMASGAKRAADANGVDVRDYEVIYKLLEDIQLAMEGLLEPEMIEEALGVAEVRAIFSIGKSAVAGCYVTNGKIQRNCRARVKRGKQIVFEGDLDSLKRNKDDVKDVSTGFECGIGCDRFANWEEGDQIEAFKLVTQRRKLTN.

Disordered regions lie at residues 55-512 (KSKT…KVHI) and 538-574 (ASLA…RQRR). Basic and acidic residues predominate over residues 83–99 (TQKDQKTEPKKKNHDQT). Composition is skewed to polar residues over residues 100-143 (ELSQ…QITA) and 165-177 (KPLT…IPQS). Over residues 220–229 (PKIDIQDKKP) the composition is skewed to basic and acidic residues. The segment covering 231-252 (QPNNQKAKTRINQGEISPQKVG) has biased composition (polar residues). Over residues 253–267 (QGNIQKIKSQNKQNQ) the composition is skewed to low complexity. Positions 288–304 (IRREKPVNKPHTNEVRN) are enriched in basic and acidic residues. Composition is skewed to polar residues over residues 324 to 349 (QGLS…NRQG) and 357 to 367 (NRTTQGQNRPG). The segment covering 485–499 (GRPDWDDSAKLDALR) has biased composition (basic and acidic residues). Basic residues-rich tracts occupy residues 544–553 (SKPKVGKRNN) and 560–574 (LKKR…RQRR). A tr-type G domain is found at 675-847 (RRPPVVTVMG…VLLVTEVEDL (173 aa)). Residues 684 to 691 (GHVDHGKT) form a G1 region. 684–691 (GHVDHGKT) lines the GTP pocket. The segment at 709-713 (GITQH) is G2. The segment at 734–737 (DTPG) is G3. Residues 734 to 738 (DTPGH) and 788 to 791 (NKID) each bind GTP. The interval 788–791 (NKID) is G4. Residues 824-826 (SAI) form a G5 region.

It belongs to the TRAFAC class translation factor GTPase superfamily. Classic translation factor GTPase family. IF-2 subfamily.

Its subcellular location is the cytoplasm. In terms of biological role, one of the essential components for the initiation of protein synthesis. Protects formylmethionyl-tRNA from spontaneous hydrolysis and promotes its binding to the 30S ribosomal subunits. Also involved in the hydrolysis of GTP during the formation of the 70S ribosomal complex. The protein is Translation initiation factor IF-2 of Prochlorococcus marinus (strain NATL1A).